The following is a 180-amino-acid chain: Peptidyl-tRNA hydrolase (180 aa).

Tyr13 is a tRNA binding site. His18 acts as the Proton acceptor in catalysis. Residues Tyr58, Asn60, and Asn100 each contribute to the tRNA site.

This sequence belongs to the PTH family. In terms of assembly, monomer.

Its subcellular location is the cytoplasm. The enzyme catalyses an N-acyl-L-alpha-aminoacyl-tRNA + H2O = an N-acyl-L-amino acid + a tRNA + H(+). Functionally, hydrolyzes ribosome-free peptidyl-tRNAs (with 1 or more amino acids incorporated), which drop off the ribosome during protein synthesis, or as a result of ribosome stalling. Its function is as follows. Catalyzes the release of premature peptidyl moieties from peptidyl-tRNA molecules trapped in stalled 50S ribosomal subunits, and thus maintains levels of free tRNAs and 50S ribosomes. This is Peptidyl-tRNA hydrolase from Fervidobacterium nodosum (strain ATCC 35602 / DSM 5306 / Rt17-B1).